An 83-amino-acid chain; its full sequence is Translation initiation factor IF-1 (83 aa).

Residues 1 to 72 enclose the S1-like domain; sequence MAKEESIEMQ…TRGRIVYREA (72 aa).

It belongs to the IF-1 family. As to quaternary structure, component of the 30S ribosomal translation pre-initiation complex which assembles on the 30S ribosome in the order IF-2 and IF-3, IF-1 and N-formylmethionyl-tRNA(fMet); mRNA recruitment can occur at any time during PIC assembly.

Its subcellular location is the cytoplasm. In terms of biological role, one of the essential components for the initiation of protein synthesis. Stabilizes the binding of IF-2 and IF-3 on the 30S subunit to which N-formylmethionyl-tRNA(fMet) subsequently binds. Helps modulate mRNA selection, yielding the 30S pre-initiation complex (PIC). Upon addition of the 50S ribosomal subunit IF-1, IF-2 and IF-3 are released leaving the mature 70S translation initiation complex. This is Translation initiation factor IF-1 from Coxiella burnetii (strain Dugway 5J108-111).